The chain runs to 469 residues: Pentatricopeptide repeat-containing protein At2g34370, mitochondrial (469 aa).

Residues 1 to 65 constitute a mitochondrion transit peptide; that stretch reads MVRLVCSRIL…QNRSFVQCRR (65 aa). 4 PPR repeats span residues 142–172, 173–207, 208–238, and 244–274; these read DARSYHTVIEMYSGCRSTDDALNVFNEMPKR, NSETWGTMIRCLAKNGEGERAIDMFTRFIEEGNKP, DKEIFKAVFFACVSIGDINEGLLHFESMYRD, and SMEDYVNVIEMLAACGHLDEALDFVERMTVE. Residues 375 to 469 form a type DYW motif region; the sequence is DIGFVPATRV…NGVCSCKDYW (95 aa).

The protein belongs to the PPR family. PCMP-H subfamily.

It localises to the mitochondrion. This Arabidopsis thaliana (Mouse-ear cress) protein is Pentatricopeptide repeat-containing protein At2g34370, mitochondrial (PCMP-H25).